Here is a 567-residue protein sequence, read N- to C-terminus: 2-isopropylmalate synthase (567 aa).

In terms of domain architecture, Pyruvate carboxyltransferase spans 28 to 302 (PQWCSVDLRD…NPELDFSDIN (275 aa)). The Mg(2+) site is built by Asp-37, His-241, His-243, and Asn-277. The segment at 435–567 (IRTPLQLNYH…DMDTQEEDIA (133 aa)) is regulatory domain.

Belongs to the alpha-IPM synthase/homocitrate synthase family. LeuA type 2 subfamily. Homodimer. Mg(2+) is required as a cofactor.

The protein localises to the cytoplasm. It catalyses the reaction 3-methyl-2-oxobutanoate + acetyl-CoA + H2O = (2S)-2-isopropylmalate + CoA + H(+). It participates in amino-acid biosynthesis; L-leucine biosynthesis; L-leucine from 3-methyl-2-oxobutanoate: step 1/4. Functionally, catalyzes the condensation of the acetyl group of acetyl-CoA with 3-methyl-2-oxobutanoate (2-ketoisovalerate) to form 3-carboxy-3-hydroxy-4-methylpentanoate (2-isopropylmalate). The chain is 2-isopropylmalate synthase from Acetoanaerobium sticklandii (strain ATCC 12662 / DSM 519 / JCM 1433 / CCUG 9281 / NCIMB 10654 / HF) (Clostridium sticklandii).